The primary structure comprises 215 residues: Probable septum site-determining protein MinC (215 aa).

It belongs to the MinC family. In terms of assembly, interacts with MinD and FtsZ.

Cell division inhibitor that blocks the formation of polar Z ring septums. Rapidly oscillates between the poles of the cell to destabilize FtsZ filaments that have formed before they mature into polar Z rings. Prevents FtsZ polymerization. This is Probable septum site-determining protein MinC from Clostridium botulinum (strain Alaska E43 / Type E3).